Consider the following 738-residue polypeptide: MAPSFENLSEQDLHEEEEEEIDFSDLKAQYEVKLEEGLDTFVVIDGLPVVPEENRQKLIKFLLRKLNTVGHTSEDAVFMPLNEKNMSEGFAFVEYETAEQAVAAVKQLHGTPLDKKHTLLVNKLMDIERYGREGRIDEEYKPPNIEPFTEKEHLRSWLGDPNARDQFALYRGDKVGVFWNNKSNPPENVVDRAHWTQLFVQWSPKGTYLASVHPQGVQLWGGPTFSKQKQFPHPFVSLIEFSPGESYLTTWSARPIQVEEGHPVLTYEEDGKNIIVWDIVTGKPLRSFVSHDLAGPESEAQPKKKVQWPAFKWSADEKYVARMLQGQSISIYELPRMNLLGKTSVKIDGVMDFEWSPATVNRDGVKQYEQLLCFWTPEIGSNPARVALMSVPSKEIVRTRNLFNVSDVKLHWQSQGNFVCVKVDRHSKSKKSMATNLEIFRVREKGVPVEVVDSLKDTVINFSWEPNGARFVLITTGDASGAGAPPKTAVSFFAPEKKGVQAGNFKLVRTIEKKTSNAIYWSPKGRFVVVATVHSQSNFDLDFWDMDFEGEKNDNEKDLAANLQLMKTVDHYGVTDIEWDPTGRYVVSGASAWTHQMENGFNLHTFSGETLAENPTDKFKQFLWRPRPPTLLSKEEQKQVRKNLREYSKEFEEEDKYAVDIANTAVVEKRKRVLNEWVAWLKREKELLTEEKEAYGLPEEADQPKAAKDAPTNTEDKGETVVEEIVEEIVEESEEIIG.

Over residues 1-10 (MAPSFENLSE) the composition is skewed to polar residues. Residues 1–20 (MAPSFENLSEQDLHEEEEEE) form a disordered region. Positions 40–126 (TFVVIDGLPV…HTLLVNKLMD (87 aa)) constitute an RRM domain. WD repeat units follow at residues 193-230 (AHWT…KQKQ), 232-289 (PHPF…RSFV), 301-342 (QPKK…LLGK), 454-494 (SLKD…SFFA), 511-554 (IEKK…EKND), and 569-607 (VDHY…HTFS). The segment at 693-720 (EAYGLPEEADQPKAAKDAPTNTEDKGET) is disordered. Basic and acidic residues predominate over residues 702–720 (DQPKAAKDAPTNTEDKGET).

Belongs to the eIF-3 subunit B family. Component of the eukaryotic translation initiation factor 3 (eIF-3) complex.

It is found in the cytoplasm. In terms of biological role, RNA-binding component of the eukaryotic translation initiation factor 3 (eIF-3) complex, which is involved in protein synthesis of a specialized repertoire of mRNAs and, together with other initiation factors, stimulates binding of mRNA and methionyl-tRNAi to the 40S ribosome. The eIF-3 complex specifically targets and initiates translation of a subset of mRNAs involved in cell proliferation. In Emericella nidulans (strain FGSC A4 / ATCC 38163 / CBS 112.46 / NRRL 194 / M139) (Aspergillus nidulans), this protein is Eukaryotic translation initiation factor 3 subunit B (prt1).